The primary structure comprises 370 residues: Calcium-binding protein 1 (370 aa).

Positions 1-198 (MGGGDGAAFK…GRGDSVPAAA (198 aa)) are disordered. Glycine 2 carries N-myristoyl glycine lipidation. The S-palmitoyl cysteine moiety is linked to residue glycine 4. Composition is skewed to low complexity over residues 50-61 (HASAGPAAMSSH), 68-84 (KTSL…GGSR), and 148-157 (ALPAAASRPS). EF-hand domains follow at residues 225-260 (EEIE…MGYM), 279-296 (GHVD…KLLA), 302-337 (IGVK…LLGH), and 339-370 (VGHR…MMSR). Aspartate 238, aspartate 240, aspartate 242, tyrosine 244, and aspartate 249 together coordinate Ca(2+). 4 residues coordinate Mg(2+): aspartate 238, aspartate 240, aspartate 242, and tyrosine 244. Ca(2+)-binding residues include aspartate 315, asparagine 317, aspartate 319, and glutamate 321. Phosphoserine is present on serine 323. Positions 326, 352, 353, 354, 356, 357, 358, 360, and 363 each coordinate Ca(2+).

As to quaternary structure, homodimer; when bound to calcium or magnesium. Interacts (via C-terminus) with ITPR1, ITPR2 and ITPR3. This binding is calcium dependent and the interaction correlates with calcium concentration. An additional calcium-independent interaction with the N-terminus of ITPR1 results in a decreased InsP(3) binding to the receptor. Interacts with CACNA1A (via C-terminal CDB motif) in the pre- and postsynaptic membranes. Interacts with CACNA1C (via C-terminal C and IQ motifs). The binding to the C motif is calcium independent whereas the binding to IQ requires the presence of calcium and is mutually exclusive with calmodulin binding. Interacts with CACNA1D. Interacts with TRPC5 (via C-terminus). Interacts (via EF-hands 1 and 2) at microtubules with MAP1LC3B. Interacts with MYO1C. Interacts (via EF-hands 1 and 2) with NSMF (via the central NLS-containing motif region), the interaction occurs in a calcium dependent manner after synaptic NMDA receptor stimulation and prevents nuclear import of NSMF. Interacts with SPACA9. Phosphorylated. The phosphorylation regulates the activity. As to expression, retina and brain. Somatodendritic compartment of neurons. Calbrain was found exclusively in brain where it is abundant in the hippocampus, habenular area in the epithalamus and in the cerebellum.

Its subcellular location is the cytoplasm. The protein localises to the cytoskeleton. It localises to the perinuclear region. The protein resides in the cell membrane. It is found in the golgi apparatus. Its subcellular location is the postsynaptic density. The protein localises to the cell cortex. Modulates calcium-dependent activity of inositol 1,4,5-triphosphate receptors (ITPRs). Inhibits agonist-induced intracellular calcium signaling. Enhances inactivation and does not support calcium-dependent facilitation of voltage-dependent P/Q-type calcium channels. Causes calcium-dependent facilitation and inhibits inactivation of L-type calcium channels by binding to the same sites as calmodulin in the C-terminal domain of CACNA1C, but has an opposite effect on channel function. Suppresses the calcium-dependent inactivation of CACNA1D. Inhibits TRPC5 channels. Prevents NMDA receptor-induced cellular degeneration. Required for the normal transfer of light signals through the retina. The sequence is that of Calcium-binding protein 1 (CABP1) from Homo sapiens (Human).